Consider the following 277-residue polypeptide: Small ribosomal subunit protein uS2 (277 aa).

Residues 247 to 277 (LSAFESSQDDESDEENREEDLLAKKFDGEAN) form a disordered region. Acidic residues predominate over residues 253–264 (SQDDESDEENRE). Positions 265-277 (EDLLAKKFDGEAN) are enriched in basic and acidic residues.

It belongs to the universal ribosomal protein uS2 family.

The sequence is that of Small ribosomal subunit protein uS2 (rpsB) from Chlamydia pneumoniae (Chlamydophila pneumoniae).